Consider the following 240-residue polypeptide: MGNILLQLLAVVALCIAPARSDWLPGTATFYGGADGSGTMGGACGYGNLYDQRYGINNAALSTPLFNDGASCGQCYLIICDYGKAPDWCKLGKAITVTGTNYGGWCNATRPYFDMSQPAWENIGIYSAGIVPILYQQVKCWRYGGVRFIINGFNYFELVLVTNMAGSGSIVSMSVKGSCTGWIQMTRNWGANWQCLAGLAGQALSFNVTSTGGQTIVFDDAVPAGWSFGQTFSTYHQFDY.

The first 21 residues, 1–21, serve as a signal peptide directing secretion; the sequence is MGNILLQLLAVVALCIAPARS. Positions 41-145 constitute an Expansin-like EG45 domain; it reads GGACGYGNLY…QQVKCWRYGG (105 aa). Residues asparagine 107 and asparagine 207 are each glycosylated (N-linked (GlcNAc...) asparagine). Residues 155–234 form the Expansin-like CBD domain; it reads YFELVLVTNM…GWSFGQTFST (80 aa).

Belongs to the expansin family. Expansin A subfamily.

The protein localises to the secreted. Its subcellular location is the cell wall. The protein resides in the membrane. May cause loosening and extension of plant cell walls by disrupting non-covalent bonding between cellulose microfibrils and matrix glucans. No enzymatic activity has been found. May be required for rapid internodal elongation in deepwater rice during submergence. The polypeptide is Expansin-A20 (EXPA20) (Oryza sativa subsp. japonica (Rice)).